The following is a 1877-amino-acid chain: Protein TIC 214 (1877 aa).

Transmembrane regions (helical) follow at residues 18–38 (IINS…FSVG), 64–84 (FITG…HLAL), 87–107 (PHTI…WKNH), 124–144 (LSIQ…HFIL), 172–192 (VGWL…LFWI), and 221–241 (IFRI…PSPI). Disordered stretches follow at residues 246–313 (LKET…GKEK), 644–695 (DDFE…NSDR), and 774–795 (PEFK…QKKE). 3 stretches are compositionally biased toward acidic residues: residues 251-268 (ETEE…EIET), 281-304 (GSTE…DETE), and 645-659 (DFEE…ESTE). Residues 685–695 (TSTKDTTNSDR) are compositionally biased toward basic and acidic residues.

Belongs to the TIC214 family. Part of the Tic complex.

The protein localises to the plastid. Its subcellular location is the chloroplast inner membrane. Its function is as follows. Involved in protein precursor import into chloroplasts. May be part of an intermediate translocation complex acting as a protein-conducting channel at the inner envelope. The sequence is that of Protein TIC 214 from Chloranthus spicatus (Chulantree).